The primary structure comprises 441 residues: MSFEELGVSKWLSEALNSMKIHTPTTIQSACIPKILKGHDCIGGAKTGSGKTIAFAAPMLTQWSEDPSGIYGLVLTPTRELALQIAEQFAALGSSMNIKVSVIVGGEDIVKQALELQRRPHFVVATPGRLADHILNSGEDTVCGLRRVKYLILDEADRLLSNSFGGDLERCFNILPSTDKRQTLLFTATVTDAVRALKDRPVPKGKLPVFIHEVETVDKVAIPSTLSVKYVFVPSYVKEAYLHSILNLPQYSDSLSIIFTNRTATAELLRRTLRKLEFRVASLHSEMPQTERTNSLHRFKAGAAKILIATDVASRGLDIPTVELVVNYDIPADADDFIHRVGRTARAGRKGDAISIVAEKDVDRILAIEERINKKMDLIEDISDNKVIKDSLNKTSVAKREAFMDMDRENFGEKRKINKSKRQANEGTISIHESKKKKHHK.

The Q motif signature appears at 1–29 (MSFEELGVSKWLSEALNSMKIHTPTTIQS). The 177-residue stretch at 32 to 208 (IPKILKGHDC…DRPVPKGKLP (177 aa)) folds into the Helicase ATP-binding domain. An ATP-binding site is contributed by 45–52 (AKTGSGKT). The DEAD box motif lies at 154-157 (DEAD). The 141-residue stretch at 247-387 (NLPQYSDSLS…LIEDISDNKV (141 aa)) folds into the Helicase C-terminal domain. A disordered region spans residues 409-441 (ENFGEKRKINKSKRQANEGTISIHESKKKKHHK).

This sequence belongs to the DEAD box helicase family. DDX49/DBP8 subfamily.

It is found in the nucleus. Its subcellular location is the nucleolus. The enzyme catalyses ATP + H2O = ADP + phosphate + H(+). Its function is as follows. ATP-binding RNA helicase involved in 40S ribosomal subunit biogenesis and is required for the normal formation of 18S rRNAs through pre-rRNA processing at A0, A1 and A2 sites. Required for vegetative growth. The chain is ATP-dependent RNA helicase DBP8 (DBP8) from Debaryomyces hansenii (strain ATCC 36239 / CBS 767 / BCRC 21394 / JCM 1990 / NBRC 0083 / IGC 2968) (Yeast).